Reading from the N-terminus, the 200-residue chain is Peptidyl-tRNA hydrolase (200 aa).

TRNA is bound at residue phenylalanine 16. The active-site Proton acceptor is the histidine 21. Positions 67, 69, and 115 each coordinate tRNA.

The protein belongs to the PTH family. Monomer.

The protein localises to the cytoplasm. The enzyme catalyses an N-acyl-L-alpha-aminoacyl-tRNA + H2O = an N-acyl-L-amino acid + a tRNA + H(+). Its function is as follows. Hydrolyzes ribosome-free peptidyl-tRNAs (with 1 or more amino acids incorporated), which drop off the ribosome during protein synthesis, or as a result of ribosome stalling. In terms of biological role, catalyzes the release of premature peptidyl moieties from peptidyl-tRNA molecules trapped in stalled 50S ribosomal subunits, and thus maintains levels of free tRNAs and 50S ribosomes. In Prochlorococcus marinus (strain MIT 9215), this protein is Peptidyl-tRNA hydrolase.